A 143-amino-acid chain; its full sequence is uncharacterized protein (143 aa).

Residues 24 to 78 (IRQRREWQNMSQTTLGEAIGVTFQQVQKYEKGVNRVGAGRLQQISKALKVEPSYF) form the HTH cro/C1-type domain. The segment at residues 35–54 (QTTLGEAIGVTFQQVQKYEK) is a DNA-binding region (H-T-H motif).

This is an uncharacterized protein from Sinorhizobium fredii (strain NBRC 101917 / NGR234).